The primary structure comprises 120 residues: UPF0102 protein Caur_2698 (120 aa).

It belongs to the UPF0102 family.

The sequence is that of UPF0102 protein Caur_2698 from Chloroflexus aurantiacus (strain ATCC 29366 / DSM 635 / J-10-fl).